Here is a 653-residue protein sequence, read N- to C-terminus: Endoglin (653 aa).

A signal peptide spans 1-24 (MDRGVLPQAIALLLAVCSFGPTAG). Over 25–581 (LAEGVQCDLQ…IVSPGLPDKG (557 aa)) the chain is Extracellular. The tract at residues 27–44 (EGVQCDLQPVDPKVTYTT) is OR1, N-terminal part. Positions 27 to 336 (EGVQCDLQPV…RSCGSGLQPS (310 aa)) are required for interaction with GDF2. Intrachain disulfides connect cysteine 31/cysteine 206, cysteine 51/cysteine 181, cysteine 241/cysteine 329, cysteine 349/cysteine 381, cysteine 362/cysteine 442, cysteine 393/cysteine 411, and cysteine 493/cysteine 549. Residues 45–198 (SQVSEGCVAH…MGHTLEWKSH (154 aa)) form an OR2 region. Residue asparagine 57 is glycosylated (N-linked (GlcNAc...) asparagine). The tract at residues 199–329 (TQASVLGCHL…SVISLQDRSC (131 aa)) is OR1, C-terminal part. Residues 269–281 (KAWTTGEYSFKIF) are essential for interaction with GDF2. Residue asparagine 306 is glycosylated (N-linked (GlcNAc...) asparagine). Residues 362–512 (CSDDVMTLVL…MVDLIQNQEA (151 aa)) enclose the ZP domain. Residues 582-606 (LVLPAVLGITFGAFLIGALLTAALW) form a helical membrane-spanning segment. Over 607 to 653 (YIHSHTRHPGKREPVVAVAAPASSESSSTNHSIGSTQSTPCSTSSMA) the chain is Cytoplasmic. Low complexity predominate over residues 625-634 (AAPASSESSS). The tract at residues 625-653 (AAPASSESSSTNHSIGSTQSTPCSTSSMA) is disordered. Polar residues predominate over residues 635 to 653 (TNHSIGSTQSTPCSTSSMA). 2 positions are modified to phosphoserine; by TGFBR1: serine 641 and serine 644.

Homodimer; disulfide-linked. Forms a heteromeric complex with the signaling receptors for transforming growth factor-beta: TGFBR1 and/or TGFBR2. It is able to bind TGFB1 and TGFB2 with high affinity, but not TGFB3. Interacts with GDF2, forming a heterotetramer with a 2:2 stoichiometry. Interacts with ACVRL1. Can form a heteromeric complex with GDF2 and ACVRL1. Interacts with BMP10. Interacts with DYNLT4. Interacts with ARRB2.

It localises to the cell membrane. Functionally, vascular endothelium glycoprotein that plays an important role in the regulation of angiogenesis. Required for normal structure and integrity of adult vasculature. Regulates the migration of vascular endothelial cells. Required for normal extraembryonic angiogenesis and for embryonic heart development. May regulate endothelial cell shape changes in response to blood flow, which drive vascular remodeling and establishment of normal vascular morphology during angiogenesis. May play a role in the binding of endothelial cells to integrins. Acts as a TGF-beta coreceptor and is involved in the TGF-beta/BMP signaling cascade that ultimately leads to the activation of SMAD transcription factors. Required for GDF2/BMP9 signaling through SMAD1 in endothelial cells and modulates TGFB1 signaling through SMAD3. The sequence is that of Endoglin (ENG) from Sus scrofa (Pig).